Consider the following 76-residue polypeptide: uncharacterized protein (76 aa).

A helical membrane pass occupies residues 20 to 42 (GIVWGPKLAPWGITLGLGAFYFF).

It localises to the membrane. This is an uncharacterized protein from Dictyostelium discoideum (Social amoeba).